The primary structure comprises 364 residues: MRLLGIETSCDETATAVIEHNLKGKSHILSNIVWSQIEDHAPYGGVVPEIAARAHVEILDTLILEALAKAKTTLKEIDAIAVTGGPGLIGGLLVGLMSAKALAFATGKPFIAVNHLEGHALTAVLTHQVTFPYLLLLVSGGHTQMILVHGVGNYQRLGTTFDDALGEAFDKTAKLLGLPYPGGPALEKAALLGDKNRIPLPRPLKGNKQLNFSFSGLKTAVRQAATAMAPLSEQDVSDIAASFQAAVIDTLQDRVHLALQYFTSQYPSSHNQEHRPPAFVVAGGVAANQAIRLTLQNLAHQHSFEFIAPPPSLCTDNAAMIAFAGAERIARGQTSPLDIAPRSRWPLDENALPLIGTGRRGAKV.

Residues H115 and H119 each contribute to the Fe cation site. Substrate-binding positions include 137-141 (LVSGG), D170, G183, and N288. D316 lines the Fe cation pocket.

The protein belongs to the KAE1 / TsaD family. Fe(2+) is required as a cofactor.

It is found in the cytoplasm. The catalysed reaction is L-threonylcarbamoyladenylate + adenosine(37) in tRNA = N(6)-L-threonylcarbamoyladenosine(37) in tRNA + AMP + H(+). Functionally, required for the formation of a threonylcarbamoyl group on adenosine at position 37 (t(6)A37) in tRNAs that read codons beginning with adenine. Is involved in the transfer of the threonylcarbamoyl moiety of threonylcarbamoyl-AMP (TC-AMP) to the N6 group of A37, together with TsaE and TsaB. TsaD likely plays a direct catalytic role in this reaction. In Bartonella bacilliformis (strain ATCC 35685 / KC583 / Herrer 020/F12,63), this protein is tRNA N6-adenosine threonylcarbamoyltransferase.